Here is a 503-residue protein sequence, read N- to C-terminus: Lithocholate 6-beta-hydroxylase (503 aa).

Residue Cys-442 coordinates heme.

It belongs to the cytochrome P450 family. The cofactor is heme.

It is found in the endoplasmic reticulum membrane. It localises to the microsome membrane. It catalyses the reaction lithocholate + reduced [NADPH--hemoprotein reductase] + O2 = 6beta-hydroxylithocholate + oxidized [NADPH--hemoprotein reductase] + H2O + H(+). In terms of biological role, catalyzes the 6 beta-hydroxylation of lithocholic acid and steroid hormones. The sequence is that of Lithocholate 6-beta-hydroxylase (CYP3A10) from Mesocricetus auratus (Golden hamster).